A 296-amino-acid chain; its full sequence is Lipoyl synthase (296 aa).

Positions 37, 42, 48, 63, 67, 70, and 276 each coordinate [4Fe-4S] cluster. A Radical SAM core domain is found at 49–265; that stretch reads WSKKHTTVMI…ERVAKTKGFL (217 aa).

This sequence belongs to the radical SAM superfamily. Lipoyl synthase family. [4Fe-4S] cluster is required as a cofactor.

Its subcellular location is the cytoplasm. The catalysed reaction is [[Fe-S] cluster scaffold protein carrying a second [4Fe-4S](2+) cluster] + N(6)-octanoyl-L-lysyl-[protein] + 2 oxidized [2Fe-2S]-[ferredoxin] + 2 S-adenosyl-L-methionine + 4 H(+) = [[Fe-S] cluster scaffold protein] + N(6)-[(R)-dihydrolipoyl]-L-lysyl-[protein] + 4 Fe(3+) + 2 hydrogen sulfide + 2 5'-deoxyadenosine + 2 L-methionine + 2 reduced [2Fe-2S]-[ferredoxin]. The protein operates within protein modification; protein lipoylation via endogenous pathway; protein N(6)-(lipoyl)lysine from octanoyl-[acyl-carrier-protein]: step 2/2. Functionally, catalyzes the radical-mediated insertion of two sulfur atoms into the C-6 and C-8 positions of the octanoyl moiety bound to the lipoyl domains of lipoate-dependent enzymes, thereby converting the octanoylated domains into lipoylated derivatives. In Rickettsia conorii (strain ATCC VR-613 / Malish 7), this protein is Lipoyl synthase.